Here is a 99-residue protein sequence, read N- to C-terminus: Nucleoid-associated protein UUR10_0100 (99 aa).

This sequence belongs to the YbaB/EbfC family. Homodimer.

The protein resides in the cytoplasm. The protein localises to the nucleoid. Binds to DNA and alters its conformation. May be involved in regulation of gene expression, nucleoid organization and DNA protection. The protein is Nucleoid-associated protein UUR10_0100 of Ureaplasma urealyticum serovar 10 (strain ATCC 33699 / Western).